The following is a 553-amino-acid chain: Chaperonin GroEL 1 (553 aa).

ATP-binding positions include 29–32 (TIGP), 86–90 (DGTTT), Gly413, 476–478 (NAL), and Asp492. The segment at 520 to 543 (DKPEPPAPAGGGGDPMGGMGGMDP) is disordered. Residues 528–543 (AGGGGDPMGGMGGMDP) show a composition bias toward gly residues.

This sequence belongs to the chaperonin (HSP60) family. In terms of assembly, forms a cylinder of 14 subunits composed of two heptameric rings stacked back-to-back. Interacts with the co-chaperonin GroES.

It localises to the cytoplasm. The catalysed reaction is ATP + H2O + a folded polypeptide = ADP + phosphate + an unfolded polypeptide.. Together with its co-chaperonin GroES, plays an essential role in assisting protein folding. The GroEL-GroES system forms a nano-cage that allows encapsulation of the non-native substrate proteins and provides a physical environment optimized to promote and accelerate protein folding. The sequence is that of Chaperonin GroEL 1 from Synechococcus sp. (strain CC9311).